Consider the following 267-residue polypeptide: Protein LicA (267 aa).

This sequence belongs to the peptidase S49 family.

Its function is as follows. Mediates phase variation of the LPS epitopes. Phase variation of H.influenza LPS epitopes expressed by LicA is determined by a translational switch. In Haemophilus influenzae (strain ATCC 51907 / DSM 11121 / KW20 / Rd), this protein is Protein LicA (licA).